The primary structure comprises 436 residues: Proteasome-activating nucleotidase (436 aa).

A coiled-coil region spans residues Lys7–Lys98. ATP contacts are provided by residues Gly223–Leu228 and His362. Residues Ala434–His436 are docks into pockets in the proteasome alpha-ring to cause gate opening.

Belongs to the AAA ATPase family. In terms of assembly, homohexamer. The hexameric complex has a two-ring architecture resembling a top hat that caps the 20S proteasome core at one or both ends. Upon ATP-binding, the C-terminus of PAN interacts with the alpha-rings of the proteasome core by binding to the intersubunit pockets.

It is found in the cytoplasm. ATPase which is responsible for recognizing, binding, unfolding and translocation of substrate proteins into the archaeal 20S proteasome core particle. Is essential for opening the gate of the 20S proteasome via an interaction with its C-terminus, thereby allowing substrate entry and access to the site of proteolysis. Thus, the C-termini of the proteasomal ATPase function like a 'key in a lock' to induce gate opening and therefore regulate proteolysis. Unfolding activity requires energy from ATP hydrolysis, whereas ATP binding alone promotes ATPase-20S proteasome association which triggers gate opening, and supports translocation of unfolded substrates. The polypeptide is Proteasome-activating nucleotidase (Methanopyrus kandleri (strain AV19 / DSM 6324 / JCM 9639 / NBRC 100938)).